The following is a 448-amino-acid chain: Probable malate:quinone oxidoreductase (448 aa).

The protein belongs to the MQO family. Requires FAD as cofactor.

The enzyme catalyses (S)-malate + a quinone = a quinol + oxaloacetate. It functions in the pathway carbohydrate metabolism; tricarboxylic acid cycle; oxaloacetate from (S)-malate (quinone route): step 1/1. Catalyzes oxidation of malate to oxaloacetate in the citric acid cycle. Donates electrons to quinones of the electron transfer chain. This chain is Probable malate:quinone oxidoreductase (mqo), found in Campylobacter jejuni subsp. jejuni serotype O:2 (strain ATCC 700819 / NCTC 11168).